The sequence spans 229 residues: Thymidylate kinase (229 aa).

Residue 9–16 (GPEGSGKS) coordinates ATP.

Belongs to the thymidylate kinase family.

It catalyses the reaction dTMP + ATP = dTDP + ADP. Its function is as follows. Phosphorylation of dTMP to form dTDP in both de novo and salvage pathways of dTTP synthesis. The chain is Thymidylate kinase from Roseiflexus castenholzii (strain DSM 13941 / HLO8).